The primary structure comprises 250 residues: ATP synthase subunit a (250 aa).

6 helical membrane-spanning segments follow: residues 26 to 46, 84 to 104, 114 to 134, 143 to 163, 193 to 213, and 216 to 236; these read FTNA…FLYL, FFPM…LGMV, IIVT…YGFY, LFVP…IEII, FVAS…LPLI, and VALT…FAVL.

The protein belongs to the ATPase A chain family. F-type ATPases have 2 components, CF(1) - the catalytic core - and CF(0) - the membrane proton channel. CF(1) has five subunits: alpha(3), beta(3), gamma(1), delta(1), epsilon(1). CF(0) has three main subunits: a(1), b(2) and c(9-12). The alpha and beta chains form an alternating ring which encloses part of the gamma chain. CF(1) is attached to CF(0) by a central stalk formed by the gamma and epsilon chains, while a peripheral stalk is formed by the delta and b chains.

It localises to the cell inner membrane. Functionally, key component of the proton channel; it plays a direct role in the translocation of protons across the membrane. The sequence is that of ATP synthase subunit a from Sinorhizobium medicae (strain WSM419) (Ensifer medicae).